The following is a 299-amino-acid chain: Mimecan (299 aa).

An N-terminal signal peptide occupies residues 1 to 19 (MKTLQSTLLLFLFVPLIKP). The N-linked (GlcNAc...) (keratan sulfate) asparagine glycan is linked to Asn-89. LRR repeat units lie at residues 113–132 (DAVP…FNKI), 133–156 (KKLT…GNLI), 157–180 (EDIE…ENQL), 181–200 (LKLP…YNKI), 201–226 (KSRG…HNAL), 227–247 (ESVP…FNNI), and 248–278 (TSIT…GNPV). Asn-215 is a glycosylation site (N-linked (GlcNAc...) (keratan sulfate) asparagine). N-linked (GlcNAc...) asparagine glycosylation is present at Asn-246. Cys-256 and Cys-289 are joined by a disulfide. A glycan (N-linked (GlcNAc...) (keratan sulfate) asparagine) is linked at Asn-259.

This sequence belongs to the small leucine-rich proteoglycan (SLRP) family. SLRP class III subfamily. Contains keratan sulfate. Keratan sulfate attachment is observed in the cornea but the protein also exists in other tissues without keratan sulfate. Post-translationally, the 12 kDa OIF in bone and the 25 kDa KSPG25 protein in cornea are probably proteolytic fragments. As to expression, bone and cornea.

Its subcellular location is the secreted. The protein localises to the extracellular space. It is found in the extracellular matrix. Induces bone formation in conjunction with TGF-beta-1 or TGF-beta-2. This Bos taurus (Bovine) protein is Mimecan (OGN).